A 389-amino-acid chain; its full sequence is MGQNLSTSNPLGFFPDHQLDPAFRANTNNPDWDFNPNKDTWPDANKVGAGAFGLGFTPPHGGLLGWSPQAQGIMQTLPANPPPASTNRQSGRQPTPLSPPLRTTHPQAMQWNSTTFHQTLQDPRVRGLYLPAGGSSSGTVNPVPTTASPTLSTSSRIGDPALNMENITSGFLGPLLVLQAGFFLLTRILTIPQSLDSWWTSLSFLGGTTVCLGQNSQSPTSNHSPTSCPPTCVGYRWMCLRRFIIFLFILLLCLIFLLVLLDYQGMLPVCPLIPGSSTTSTGPCRTCTTPAQGTSMYPSCCCTKPSDGNCTCIPIPSSWAFGKFLWEWASARFSWLSLLVPFVQWFVGLSPTVWLSVIWMMWYWGPSLYNTLSPFLPLLPIFFYLWVYI.

N-acetylmethionine is present on methionine 1. Residue glycine 2 is the site of N-myristoyl glycine; by host attachment. The pre-S1 stretch occupies residues 2-108 (GQNLSTSNPL…PPLRTTHPQA (107 aa)). The interval 2–163 (GQNLSTSNPL…SSRIGDPALN (162 aa)) is pre-S. The Virion surface; in external conformation portion of the chain corresponds to 2–170 (GQNLSTSNPL…ALNMENITSG (169 aa)). Topologically, residues 2–242 (GQNLSTSNPL…VGYRWMCLRR (241 aa)) are intravirion; in internal conformation. 2 disordered regions span residues 76–102 (TLPA…PPLR) and 133–154 (GGSS…LSTS). The segment covering 85–95 (STNRQSGRQPT) has biased composition (polar residues). A pre-S2 region spans residues 109–163 (MQWNSTTFHQTLQDPRVRGLYLPAGGSSSGTVNPVPTTASPTLSTSSRIGDPALN). Over residues 142–154 (PVPTTASPTLSTS) the composition is skewed to low complexity. A helical transmembrane segment spans residues 171–191 (FLGPLLVLQAGFFLLTRILTI). At 192–242 (PQSLDSWWTSLSFLGGTTVCLGQNSQSPTSNHSPTSCPPTCVGYRWMCLRR) the chain is on the intravirion; in external conformation side. The chain crosses the membrane as a helical span at residues 243 to 263 (FIIFLFILLLCLIFLLVLLDY). Topologically, residues 264–337 (QGMLPVCPLI…WASARFSWLS (74 aa)) are virion surface. Asparagine 309 is a glycosylation site (N-linked (GlcNAc...) asparagine; by host). Residues 338–358 (LLVPFVQWFVGLSPTVWLSVI) form a helical membrane-spanning segment. Residues 359-364 (WMMWYW) are Intravirion-facing. Residues 365–387 (GPSLYNTLSPFLPLLPIFFYLWV) traverse the membrane as a helical segment. Over 388 to 389 (YI) the chain is Virion surface.

This sequence belongs to the orthohepadnavirus major surface antigen family. As to quaternary structure, in its internal form (Li-HBsAg), interacts with the capsid protein and with the isoform S. Interacts with host chaperone CANX. Associates with host chaperone CANX through its pre-S2 N glycan; this association may be essential for isoform M proper secretion. In terms of assembly, interacts with isoform L. Interacts with the antigens of satellite virus HDV (HDVAgs); this interaction is required for encapsidation of HDV genomic RNA. Isoform M is N-terminally acetylated by host at a ratio of 90%, and N-glycosylated by host at the pre-S2 region. Post-translationally, myristoylated.

It is found in the virion membrane. In terms of biological role, the large envelope protein exists in two topological conformations, one which is termed 'external' or Le-HBsAg and the other 'internal' or Li-HBsAg. In its external conformation the protein attaches the virus to cell receptors and thereby initiating infection. This interaction determines the species specificity and liver tropism. This attachment induces virion internalization predominantly through caveolin-mediated endocytosis. The large envelope protein also assures fusion between virion membrane and endosomal membrane. In its internal conformation the protein plays a role in virion morphogenesis and mediates the contact with the nucleocapsid like a matrix protein. Functionally, the middle envelope protein plays an important role in the budding of the virion. It is involved in the induction of budding in a nucleocapsid independent way. In this process the majority of envelope proteins bud to form subviral lipoprotein particles of 22 nm of diameter that do not contain a nucleocapsid. The polypeptide is Large envelope protein (Homo sapiens (Human)).